Reading from the N-terminus, the 208-residue chain is Ras-related protein Rab-6A (208 aa).

Residue Ser-2 is modified to N-acetylserine. Residues Ser-23, Val-24, Gly-25, Lys-26, Thr-27, Ser-28, Asp-39, Asn-40, Tyr-42, and Thr-45 each contribute to the GTP site. Residue Thr-27 participates in Mg(2+) binding. A Switch 1 motif is present at residues 32–50 (RFMYDSFDNTYQATIGIDF). Mg(2+) is bound by residues Thr-45 and Asp-68. The Switch 2 motif lies at 69-88 (TAGQERFRSLIPSYIRDSTV). Position 71 (Gly-71) interacts with GTP. An O-AMP-tyrosine; by Legionella DrrA modification is found at Tyr-82. GTP contacts are provided by Asn-126, Lys-127, Asp-129, Ser-156, Ala-157, and Lys-158. Ser-184 bears the Phosphoserine mark. Residues Cys-206 and Cys-208 are each lipidated (S-geranylgeranyl cysteine). Position 208 is a cysteine methyl ester (Cys-208).

It belongs to the small GTPase superfamily. Rab family. As to quaternary structure, interacts (GTP-bound) with DYNLRB1; the interaction is direct. Interacts with BICD1. Interacts with BICD2; the interaction is direct. Interacts (GTP-bound) with VPS13B. In terms of assembly, interacts with BICD1. Interacts (GDP-bound) with DYNLRB1; the interaction is direct. Interacts (GTP-bound) with VPS13B. Interacts with BICDL1; leads to its accumulation in the pericentrosomal region. Interacts with SCYL1BP1. Interacts with VSP52. Interacts with RABGAP1. Interacts with GCC2 (via its GRIP domain). Interacts with RAB6IP1 (via its RUN 1 domain). Interacts with TMF1. Interacts with CIMAP3. Interacts (GTP-bound) with APBA1/MINT1 isoform 2, also called Mint1_826, but not with isoform 1. Interacts with RIC1; the interaction is direct with a preference for RAB6A-GDP. Interacts with RGP1; the interaction is direct with a preference for RAB6A-GDP. As to quaternary structure, (Microbial infection) Interacts with human cytomegalovirus protein UL32. It depends on Mg(2+) as a cofactor. Post-translationally, prenylated. In terms of tissue distribution, ubiquitous.

The protein localises to the golgi apparatus membrane. It is found in the cytoplasmic vesicle. Its subcellular location is the secretory vesicle. The protein resides in the acrosome membrane. It carries out the reaction GTP + H2O = GDP + phosphate + H(+). Regulated by guanine nucleotide exchange factors (GEFs) which promote the exchange of bound GDP for free GTP. Regulated by GTPase activating proteins (GAPs) which increase the GTP hydrolysis activity. Inhibited by GDP dissociation inhibitors (GDIs). Functionally, the small GTPases Rab are key regulators of intracellular membrane trafficking, from the formation of transport vesicles to their fusion with membranes. Rabs cycle between an inactive GDP-bound form and an active GTP-bound form that is able to recruit to membranes different sets of downstream effectors directly responsible for vesicle formation, movement, tethering and fusion. RAB6A acts as a regulator of COPI-independent retrograde transport from the Golgi apparatus towards the endoplasmic reticulum (ER). Has a low GTPase activity. Recruits VPS13B to the Golgi membrane. Plays a role in neuron projection development. The chain is Ras-related protein Rab-6A from Homo sapiens (Human).